A 141-amino-acid polypeptide reads, in one-letter code: Putative pre-16S rRNA nuclease (141 aa).

Belongs to the YqgF nuclease family.

The protein resides in the cytoplasm. In terms of biological role, could be a nuclease involved in processing of the 5'-end of pre-16S rRNA. This is Putative pre-16S rRNA nuclease from Chlorobium luteolum (strain DSM 273 / BCRC 81028 / 2530) (Pelodictyon luteolum).